A 72-amino-acid chain; its full sequence is Disintegrin batroxostatin (72 aa).

Residues 1-72 (EAGEECDCGA…SADCPRNRFY (72 aa)) form the Disintegrin domain. Intrachain disulfides connect Cys-6–Cys-21, Cys-8–Cys-16, Cys-15–Cys-38, Cys-29–Cys-35, Cys-34–Cys-59, and Cys-47–Cys-66. The Cell attachment site signature appears at 51–53 (RGD). The tract at residues 52–72 (GDNPDDRCTGQSADCPRNRFY) is disordered.

The protein belongs to the venom metalloproteinase (M12B) family. P-II subfamily. P-IIa sub-subfamily. In terms of assembly, monomer. As to expression, expressed by the venom gland.

Its subcellular location is the secreted. Functionally, inhibits fibrinogen interaction with platelets. Acts by binding to the glycoprotein IIb-IIIa receptor (ITGA2B/ITGB3) on the platelet surface and inhibits aggregation induced by ADP, thrombin, platelet-activating factor and collagen. Also inhibits T24 and SK-Mel-28 cell adhesion to fibronectin with IC(50) of 4.4 uM and 33 nM, respectively. The sequence is that of Disintegrin batroxostatin from Bothrops atrox (Barba amarilla).